The chain runs to 340 residues: Ketol-acid reductoisomerase (NADP(+)) (340 aa).

The KARI N-terminal Rossmann domain occupies 1–182 (MRVYYDRDCD…GGGRSGIIET (182 aa)). NADP(+) is bound by residues 24–27 (YGSQ), arginine 48, serine 51, serine 53, and 83–86 (DELQ). Histidine 108 is a catalytic residue. Residue glycine 134 coordinates NADP(+). Residues 183–329 (NFREECETDL…ETLRGMMPWI (147 aa)) enclose the KARI C-terminal knotted domain. Positions 191, 195, 227, and 231 each coordinate Mg(2+). A substrate-binding site is contributed by serine 252.

The protein belongs to the ketol-acid reductoisomerase family. Requires Mg(2+) as cofactor.

It carries out the reaction (2R)-2,3-dihydroxy-3-methylbutanoate + NADP(+) = (2S)-2-acetolactate + NADPH + H(+). The catalysed reaction is (2R,3R)-2,3-dihydroxy-3-methylpentanoate + NADP(+) = (S)-2-ethyl-2-hydroxy-3-oxobutanoate + NADPH + H(+). It participates in amino-acid biosynthesis; L-isoleucine biosynthesis; L-isoleucine from 2-oxobutanoate: step 2/4. The protein operates within amino-acid biosynthesis; L-valine biosynthesis; L-valine from pyruvate: step 2/4. Involved in the biosynthesis of branched-chain amino acids (BCAA). Catalyzes an alkyl-migration followed by a ketol-acid reduction of (S)-2-acetolactate (S2AL) to yield (R)-2,3-dihydroxy-isovalerate. In the isomerase reaction, S2AL is rearranged via a Mg-dependent methyl migration to produce 3-hydroxy-3-methyl-2-ketobutyrate (HMKB). In the reductase reaction, this 2-ketoacid undergoes a metal-dependent reduction by NADPH to yield (R)-2,3-dihydroxy-isovalerate. This is Ketol-acid reductoisomerase (NADP(+)) from Jannaschia sp. (strain CCS1).